Here is a 252-residue protein sequence, read N- to C-terminus: Ferritin-2, chloroplastic (252 aa).

A chloroplast-targeting transit peptide spans 1 to 43 (MMLRVSSSPAAAVANHLSGGAAATTAPARVTAQRSGVSLSAAA). Positions 44–80 (AAGKGKEVLSGVVFQPFEEIKGELALVPQSPDRSLAR) are extension peptide (EP). The Ferritin-like diiron domain maps to 81-234 (HKFVDDCEAA…KYVAQLRRVG (154 aa)). 5 residues coordinate Fe cation: glutamate 98, glutamate 133, histidine 136, glutamate 182, and glutamine 216.

This sequence belongs to the ferritin family. In terms of assembly, oligomer of 24 subunits. There are two types of subunits: L (light) chain and H (heavy) chain. The major chain can be light or heavy, depending on the species and tissue type. The functional molecule forms a roughly spherical shell with a diameter of 12 nm and contains a central cavity into which the insoluble mineral iron core is deposited. In terms of tissue distribution, ferritins accumulate in seed during maturation. Then, they are degraded during the first days of germination. Present in roots and leaves after iron treatment.

Its subcellular location is the plastid. It is found in the chloroplast. The enzyme catalyses 4 Fe(2+) + O2 + 4 H(+) = 4 Fe(3+) + 2 H2O. Stores iron in a soluble, non-toxic, readily available form. Important for iron homeostasis. Has ferroxidase activity. Iron is taken up in the ferrous form and deposited as ferric hydroxides after oxidation. The chain is Ferritin-2, chloroplastic (FER2) from Zea mays (Maize).